Here is a 399-residue protein sequence, read N- to C-terminus: Phosphoglycerate kinase (399 aa).

Substrate-binding positions include 21–23, Arg-36, 59–62, Arg-120, and Arg-158; these read DFN and HLGR. ATP contacts are provided by residues Lys-209, Gly-297, Glu-328, and 355–358; that span reads GGDS.

It belongs to the phosphoglycerate kinase family. In terms of assembly, monomer.

It localises to the cytoplasm. It carries out the reaction (2R)-3-phosphoglycerate + ATP = (2R)-3-phospho-glyceroyl phosphate + ADP. It functions in the pathway carbohydrate degradation; glycolysis; pyruvate from D-glyceraldehyde 3-phosphate: step 2/5. The protein is Phosphoglycerate kinase of Streptococcus suis (strain 05ZYH33).